Consider the following 611-residue polypeptide: Protein decapping 5 (611 aa).

One can recognise a Sm domain in the interval 9–92; sequence KSSSAADSYV…IKDLQVKASP (84 aa). 6 disordered regions span residues 111-153, 183-238, 264-301, 318-362, 396-455, and 519-611; these read HYPS…AMPL, GLPQ…PSSL, SSSL…PTLP, EAST…DKPK, QVSS…AGRS, and FFDS…NRTT. Composition is skewed to polar residues over residues 117–140 and 203–214; these read PTSG…NGQP and NSLQQPLQYPNF. Over residues 264-281 the composition is skewed to low complexity; the sequence is SSSLQSTLQSAPSPSLAS. 3 stretches are compositionally biased toward polar residues: residues 318–330, 396–413, and 424–437; these read EAST…NKPS, QVSS…TSEA, and ARPT…SFPN. Over residues 441-453 the composition is skewed to basic residues; that stretch reads YRGRGRGRGRGAG. The DFDF domain maps to 453 to 489; the sequence is GRSHQVMKFTEDFDFTAMNEKFNKDEVWGHLGKSTTL. The FFD box signature appears at 512-527; sequence PVYNKDDFFDSLSSNT. Over residues 528–547 the composition is skewed to basic and acidic residues; that stretch reads IDRESQNSRPRFSEQRKLDT. The TFG box motif lies at 534–554; it reads NSRPRFSEQRKLDTETFGEFS. Over residues 559–604 the composition is skewed to gly residues; the sequence is GRGGRGGYGRNNGYSRGGYGGRGYGGYGGRGGGGGGYGYGGRGQGR.

It belongs to the LSM14 family. In terms of assembly, homodimer. Component of the decapping complex. Interacts with DCP1 and DCP2.

Its subcellular location is the cytoplasm. It localises to the P-body. Its function is as follows. As a component of the decapping complex, involved in the degradation of mRNAs. Promotes P-body formation. Translational repressor. This chain is Protein decapping 5 (DCP5), found in Arabidopsis thaliana (Mouse-ear cress).